The primary structure comprises 3140 residues: Genome polyprotein (3140 aa).

Residues R165 to Y308 form the Peptidase S30 domain. Active-site for P1 proteinase activity residues include H216, D225, and S259. Positions K360–C363 match the Involved in interaction with stylet and aphid transmission motif. An Involved in virions binding and aphid transmission motif is present at residues P618–K620. Residues M644 to G766 form the Peptidase C6 domain. Active-site for helper component proteinase activity residues include C652 and H725. The 153-residue stretch at E1240–E1392 folds into the Helicase ATP-binding domain. G1253 to S1260 serves as a coordination point for ATP. Positions D1342–H1345 match the DECH box motif. Residues D1411–S1570 form the Helicase C-terminal domain. The short motif at K1897–K1904 is the Nuclear localization signal element. Y1919 carries the O-(5'-phospho-RNA)-tyrosine modification. The 219-residue stretch at S2050–R2268 folds into the Peptidase C4 domain. Active-site for nuclear inclusion protein A activity residues include H2095, D2130, and C2200. The 125-residue stretch at W2534–Y2658 folds into the RdRp catalytic domain. T2829 and T2834 each carry an O-linked (GlcNAc) threonine; by host glycan. S2835 bears the Phosphoserine mark. O-linked (GlcNAc) threonine; by host glycans are attached at residues T2851, T2863, T2864, and T2868. S2875 carries an O-linked (GlcNAc) serine; by host glycan. 3 positions are modified to phosphoserine: S2891, S2911, and S2928. T3064 and T3123 each carry phosphothreonine.

It belongs to the potyviridae genome polyprotein family. Interacts with host eIF4E protein (via cap-binding region); this interaction mediates the translation of the VPg-viral RNA conjugates. Part of a complex that comprises VPg, RNA, host EIF4E and EIF4G; this interaction mediates the translation of the VPg-viral RNA conjugates. In terms of processing, VPg is uridylylated by the polymerase and is covalently attached to the 5'-end of the genomic RNA. This uridylylated form acts as a nucleotide-peptide primer for the polymerase. Genome polyprotein of potyviruses undergoes post-translational proteolytic processing by the main proteinase NIa-pro resulting in the production of at least ten individual proteins. The P1 proteinase and the HC-pro cleave only their respective C-termini autocatalytically. 6K1 is essential for proper proteolytic separation of P3 from CI.

The protein localises to the host cytoplasmic vesicle. Its subcellular location is the host nucleus. It localises to the virion. The catalysed reaction is RNA(n) + a ribonucleoside 5'-triphosphate = RNA(n+1) + diphosphate. It carries out the reaction Hydrolyzes glutaminyl bonds, and activity is further restricted by preferences for the amino acids in P6 - P1' that vary with the species of potyvirus, e.g. Glu-Xaa-Xaa-Tyr-Xaa-Gln-|-(Ser or Gly) for the enzyme from tobacco etch virus. The natural substrate is the viral polyprotein, but other proteins and oligopeptides containing the appropriate consensus sequence are also cleaved.. The enzyme catalyses Hydrolyzes a Gly-|-Gly bond at its own C-terminus, commonly in the sequence -Tyr-Xaa-Val-Gly-|-Gly, in the processing of the potyviral polyprotein.. Required for aphid transmission and also has proteolytic activity. Only cleaves a Gly-Gly dipeptide at its own C-terminus. Interacts with virions and aphid stylets. Acts as a suppressor of RNA-mediated gene silencing, also known as post-transcriptional gene silencing (PTGS), a mechanism of plant viral defense that limits the accumulation of viral RNAs. May have RNA-binding activity. In terms of biological role, has helicase activity. It may be involved in replication. Functionally, indispensable for virus replication. Reduces the abundance of host transcripts related to jasmonic acid biosynthesis therefore altering the host defenses. In order to increase its own stability, decreases host protein degradation pathways. Its function is as follows. Indispensable for virus replication. Mediates the cap-independent, EIF4E-dependent translation of viral genomic RNAs. Binds to the cap-binding site of host EIF4E and thus interferes with the host EIF4E-dependent mRNA export and translation. VPg-RNA directly binds EIF4E and is a template for transcription. Also forms trimeric complexes with EIF4E-EIF4G, which are templates for translation. In terms of biological role, has RNA-binding and proteolytic activities. Functionally, an RNA-dependent RNA polymerase that plays an essential role in the virus replication. Its function is as follows. Involved in aphid transmission, cell-to-cell and systemis movement, encapsidation of the viral RNA and in the regulation of viral RNA amplification. This chain is Genome polyprotein, found in Prunus armeniaca (Apricot).